A 175-amino-acid chain; its full sequence is Microfibril-associated glycoprotein 3 (175 aa).

The Cytoplasmic portion of the chain corresponds to 1-175 (FRTEGAEKLQ…KDGSFESCQL (175 aa)). Residues 85-175 (KERPALNAQD…KDGSFESCQL (91 aa)) are disordered. Over residues 145-175 (QDSSHFSPPDDTGSTESNSNYKDGSFESCQL) the composition is skewed to polar residues.

Post-translationally, glycosylated.

It localises to the cell membrane. Component of the elastin-associated microfibrils. The protein is Microfibril-associated glycoprotein 3 (MFAP3) of Bos taurus (Bovine).